Reading from the N-terminus, the 317-residue chain is tRNA dimethylallyltransferase (317 aa).

G14–S21 is a binding site for ATP. A substrate-binding site is contributed by T16–S21. 2 interaction with substrate tRNA regions span residues D39–L42 and Q163–R167.

The protein belongs to the IPP transferase family. As to quaternary structure, monomer. Requires Mg(2+) as cofactor.

It catalyses the reaction adenosine(37) in tRNA + dimethylallyl diphosphate = N(6)-dimethylallyladenosine(37) in tRNA + diphosphate. Its function is as follows. Catalyzes the transfer of a dimethylallyl group onto the adenine at position 37 in tRNAs that read codons beginning with uridine, leading to the formation of N6-(dimethylallyl)adenosine (i(6)A). The polypeptide is tRNA dimethylallyltransferase (Xylella fastidiosa (strain M12)).